We begin with the raw amino-acid sequence, 314 residues long: Methionyl-tRNA formyltransferase (314 aa).

111–114 (SLLP) contacts (6S)-5,6,7,8-tetrahydrofolate.

Belongs to the Fmt family.

It catalyses the reaction L-methionyl-tRNA(fMet) + (6R)-10-formyltetrahydrofolate = N-formyl-L-methionyl-tRNA(fMet) + (6S)-5,6,7,8-tetrahydrofolate + H(+). Functionally, attaches a formyl group to the free amino group of methionyl-tRNA(fMet). The formyl group appears to play a dual role in the initiator identity of N-formylmethionyl-tRNA by promoting its recognition by IF2 and preventing the misappropriation of this tRNA by the elongation apparatus. The polypeptide is Methionyl-tRNA formyltransferase (Chlorobium chlorochromatii (strain CaD3)).